The primary structure comprises 345 residues: Phosphoribosylformylglycinamidine cyclo-ligase (345 aa).

Belongs to the AIR synthase family.

It is found in the cytoplasm. It carries out the reaction 2-formamido-N(1)-(5-O-phospho-beta-D-ribosyl)acetamidine + ATP = 5-amino-1-(5-phospho-beta-D-ribosyl)imidazole + ADP + phosphate + H(+). The protein operates within purine metabolism; IMP biosynthesis via de novo pathway; 5-amino-1-(5-phospho-D-ribosyl)imidazole from N(2)-formyl-N(1)-(5-phospho-D-ribosyl)glycinamide: step 2/2. This Tolumonas auensis (strain DSM 9187 / NBRC 110442 / TA 4) protein is Phosphoribosylformylglycinamidine cyclo-ligase.